Here is an 892-residue protein sequence, read N- to C-terminus: Alanine--tRNA ligase (892 aa).

Histidine 596, histidine 600, cysteine 700, and histidine 704 together coordinate Zn(2+).

It belongs to the class-II aminoacyl-tRNA synthetase family. Zn(2+) is required as a cofactor.

Its subcellular location is the cytoplasm. It carries out the reaction tRNA(Ala) + L-alanine + ATP = L-alanyl-tRNA(Ala) + AMP + diphosphate. Its function is as follows. Catalyzes the attachment of alanine to tRNA(Ala) in a two-step reaction: alanine is first activated by ATP to form Ala-AMP and then transferred to the acceptor end of tRNA(Ala). Also edits incorrectly charged Ser-tRNA(Ala) and Gly-tRNA(Ala) via its editing domain. The protein is Alanine--tRNA ligase of Methanococcus maripaludis (strain C5 / ATCC BAA-1333).